Consider the following 545-residue polypeptide: Thermosome subunit beta (545 aa).

The protein belongs to the TCP-1 chaperonin family. In terms of assembly, forms a Heterooligomeric complex of two stacked eight-membered rings.

Its function is as follows. Molecular chaperone; binds unfolded polypeptides in vitro, and has a weak ATPase activity. This is Thermosome subunit beta (thsB) from Thermococcus sp. (strain KS-8).